A 487-amino-acid chain; its full sequence is Cobyric acid synthase (487 aa).

The GATase cobBQ-type domain occupies 249 to 435; the sequence is GIDIAIVRLP…IHGIFDEGDF (187 aa). The active-site Nucleophile is the cysteine 330. Histidine 427 is an active-site residue.

The protein belongs to the CobB/CobQ family. CobQ subfamily.

The protein operates within cofactor biosynthesis; adenosylcobalamin biosynthesis. Catalyzes amidations at positions B, D, E, and G on adenosylcobyrinic A,C-diamide. NH(2) groups are provided by glutamine, and one molecule of ATP is hydrogenolyzed for each amidation. This is Cobyric acid synthase from Clostridium perfringens (strain ATCC 13124 / DSM 756 / JCM 1290 / NCIMB 6125 / NCTC 8237 / Type A).